The following is a 993-amino-acid chain: UPF0182 protein ROP_64500 (993 aa).

7 consecutive transmembrane segments (helical) span residues 18–38, 63–83, 114–134, 174–194, 211–231, 260–280, and 288–308; these read VLLV…RLIS, LLLF…ALLL, LFGL…AQSS, WLFV…YIFG, VQLA…YWFD, KLIL…AIFL, and MATA…PLVV. The interval 904 to 948 is disordered; that stretch reads TGSVATAPSAEEGTPPETGTTPPVEQGAAPPAPTAPATPPSGTDV. The segment covering 908–926 has biased composition (low complexity); it reads ATAPSAEEGTPPETGTTPP. The span at 933-942 shows a compositional bias: pro residues; the sequence is PPAPTAPATP.

This sequence belongs to the UPF0182 family.

The protein localises to the cell membrane. In Rhodococcus opacus (strain B4), this protein is UPF0182 protein ROP_64500.